The chain runs to 132 residues: Small ribosomal subunit protein uS8c (132 aa).

It belongs to the universal ribosomal protein uS8 family. In terms of assembly, part of the 30S ribosomal subunit.

The protein resides in the plastid. It is found in the chloroplast. One of the primary rRNA binding proteins, it binds directly to 16S rRNA central domain where it helps coordinate assembly of the platform of the 30S subunit. The chain is Small ribosomal subunit protein uS8c (rps8) from Cycas taitungensis (Prince sago).